Consider the following 451-residue polypeptide: Bifunctional protein GlmU (451 aa).

Residues 1–236 are pyrophosphorylase; sequence MDQTPSYSPP…YEELRGINSK (236 aa). UDP-N-acetyl-alpha-D-glucosamine-binding positions include 17–20, Lys31, Gln79, 84–85, 105–107, Gly144, Glu162, Asn177, and Asn234; these read LAAG, GT, and YGD. Asp107 contacts Mg(2+). Asn234 provides a ligand contact to Mg(2+). The interval 237 to 257 is linker; it reads VELAEAEATVQIVLRRKALEN. The interval 258–451 is N-acetyltransferase; sequence GVTMTAPETV…EIRRQLKGSV (194 aa). The UDP-N-acetyl-alpha-D-glucosamine site is built by Arg323 and Lys341. The active-site Proton acceptor is His353. Tyr356 and Asn367 together coordinate UDP-N-acetyl-alpha-D-glucosamine. Residues Ala370, 376-377, Ser395, Ala413, and Arg430 each bind acetyl-CoA; that span reads NY.

In the N-terminal section; belongs to the N-acetylglucosamine-1-phosphate uridyltransferase family. This sequence in the C-terminal section; belongs to the transferase hexapeptide repeat family. Homotrimer. The cofactor is Mg(2+).

The protein localises to the cytoplasm. The enzyme catalyses alpha-D-glucosamine 1-phosphate + acetyl-CoA = N-acetyl-alpha-D-glucosamine 1-phosphate + CoA + H(+). It catalyses the reaction N-acetyl-alpha-D-glucosamine 1-phosphate + UTP + H(+) = UDP-N-acetyl-alpha-D-glucosamine + diphosphate. It participates in nucleotide-sugar biosynthesis; UDP-N-acetyl-alpha-D-glucosamine biosynthesis; N-acetyl-alpha-D-glucosamine 1-phosphate from alpha-D-glucosamine 6-phosphate (route II): step 2/2. The protein operates within nucleotide-sugar biosynthesis; UDP-N-acetyl-alpha-D-glucosamine biosynthesis; UDP-N-acetyl-alpha-D-glucosamine from N-acetyl-alpha-D-glucosamine 1-phosphate: step 1/1. It functions in the pathway bacterial outer membrane biogenesis; LPS lipid A biosynthesis. Functionally, catalyzes the last two sequential reactions in the de novo biosynthetic pathway for UDP-N-acetylglucosamine (UDP-GlcNAc). The C-terminal domain catalyzes the transfer of acetyl group from acetyl coenzyme A to glucosamine-1-phosphate (GlcN-1-P) to produce N-acetylglucosamine-1-phosphate (GlcNAc-1-P), which is converted into UDP-GlcNAc by the transfer of uridine 5-monophosphate (from uridine 5-triphosphate), a reaction catalyzed by the N-terminal domain. This is Bifunctional protein GlmU from Granulibacter bethesdensis (strain ATCC BAA-1260 / CGDNIH1).